The chain runs to 76 residues: uncharacterized protein (76 aa).

A helical membrane pass occupies residues 20–42 (GIVWGPKLAPWGITLGLGAFYFF).

The protein localises to the membrane. This is an uncharacterized protein from Dictyostelium discoideum (Social amoeba).